Here is a 1153-residue protein sequence, read N- to C-terminus: MFNQEQGTDYPVLNKKKLESLANLKLAMGGHEYPTDDLTQQGLKLAGPLLEEVEESEVNHTTAPIDARLQTFLNSYFAECGEEVPKIPDDTFILDREGLGRVLSFPPHKQEFFCETMKSYKIKQGVLHNPAKDKRTTVGVFHICQSDVPVPADKIECPKIAFLRMLKAAFYGAPDDHLIIPYTAECKEPTRSWVSLYMRPVVVPGVKGVKGFEHEKATEMHFFVPGNMVSCLDFVESVFGNAGNPRLSKNDAALDPLGWTGHSGMAILAPHLTRMTKKECGLPHISQATERQKRERMCWEKEDELYNDGKTFKMYCRDASGVICTIIADNYFGYCKKEVKTQISYSANLYGFAEEEHAGGAVTRPSYDLGEACKAVQYAEGYKFSEMVEKNKHSIIVKEEGYAVDKKYPEGIIYVPEDSVFTIEDASIKFNHNGKEESILLTPKVNYVLPNGYTIILHDTMTSRRWTLRGILPQYTLCHKPCTVSGGGKSEISKSIRDAVIEGSVFVNNKEEDFKAVQEIFDHDFSKRYANGEVKPIHILDPNVTLGTVVELLTPSHLFTKEHNDYISSISPLIVELVMTIKSLYREDWKGDWQSRITVDKINGNEGNELKYRGANLCSQYLRVGFERDETTWRVFQLRKDFFPAAKLQMEDDITASVIVPTKLLKTPINNMQKKACKIVKNCELRLFQRPDDAVFRGFDKQTEYDFSIPGHFISNYQPMTREEAKDFTKDVVRLYQYTEPMRKCLQDFVAGKDEAKYIVSSSYTRLVPEGDKLVGSKNPRYLQRRPDMLDPEYTYMTFKAIQLYRKISDEEPLYTPVDAVLSGRRNNPPQVAKNGMKLRPLSVFAPLHYFELPELLMECITSMTGASPSMFGAGSEGALTKGPFNSLPAVVDLNNYLLGMICCGYSGFVSSASYCGPHYKVAHDISLLIPEIWSKMRRYEQEPKYLIEHGYLEPCPDVTYNGKTYSGKRLGYRITTAFANHFLRTLFSMPNSVMPEDFLKPELQDLAIYADSYEYMSQTDKGIAMNYVKDGTVEGACPPLKALIYIMANGEYNGMTRESKEFREMFDPEVVLNSEWYKERLVTRQKLEVAKLNKDLAYLNKTIAEKPRLVETLNKQIAAVKEELQYVSSEEYLIDIDGSIGTDPYPYKCMKH.

Positions 1085 to 1131 (RQKLEVAKLNKDLAYLNKTIAEKPRLVETLNKQIAAVKEELQYVSSE) form a coiled coil.

It belongs to the PPi-type phosphoenolpyruvate carboxykinase family. As to quaternary structure, monomer and trimer; forms heterotrimers with PEPCK1 and PEPCK3.

It localises to the cytoplasm. It is found in the cytosol. The enzyme catalyses oxaloacetate + diphosphate = phosphoenolpyruvate + phosphate + CO2. Functionally, inorganic pyrophosphate (PPi)-dependent phosphoenolpyruvate carboxykinase, which regulates the carbon flow of the central metabolism by fixing CO(2) to phosphoenolpyruvate to produce oxaloacetate. Can also produce pyruvate and diphosphate from phosphoenolpyruvate and phosphate. This is PPi-type phosphoenolpyruvate carboxykinase 2 from Entamoeba histolytica (strain ATCC 30459 / HM-1:IMSS / ABRM).